A 1337-amino-acid polypeptide reads, in one-letter code: Partitioning defective 3 homolog (1337 aa).

Serine 25 carries the phosphoserine modification. Disordered stretches follow at residues 81–109 and 143–263; these read EQDP…SELG and SSDP…LENM. At threonine 91 the chain carries Phosphothreonine. Low complexity predominate over residues 91–100; it reads TSASSTGTQS. Composition is skewed to polar residues over residues 150 to 163 and 171 to 188; these read GLST…FSSE and TRWS…TGSP. Phosphoserine occurs at positions 156 and 174. Residues 190 to 203 show a composition bias toward basic and acidic residues; the sequence is TCDRKKDENYRSLP. The span at 207-224 shows a compositional bias: polar residues; sequence SSWSNQFQRDNARSSLSA. The region spanning 271–359 is the PDZ 1 domain; sequence MVKLVQVPND…ARVIWFHVVP (89 aa). Position 383 is a phosphoserine (serine 383). A disordered region spans residues 397–441; the sequence is NAPQALPRAPRLSQPPEQLDAHPRLPHSAHASTKPPTAPALAPPN. PDZ domains follow at residues 461 to 546 and 590 to 677; these read NIQL…LVFR and EVPL…GMIQ. Tyrosine 489 is modified (phosphotyrosine). Serine 692, serine 695, serine 715, serine 728, serine 809, and serine 827 each carry phosphoserine. Residues 712–936 are interaction with PRKCI and PRKCZ; sequence RRISHSLYSG…AAIDKSYDKP (225 aa). At lysine 834 the chain carries N6-acetyllysine. The residue at position 837 (serine 837) is a Phosphoserine. Lysine 851 is modified (N6-acetyllysine). Phosphoserine occurs at positions 852 and 873. Disordered stretches follow at residues 866–888, 932–1015, 1028–1055, 1110–1271, and 1284–1337; these read VDDQ…KKSS, SYDK…AKKG, KHRK…DRVR, LNAR…LGGH, and LLRQ…PFYS. At lysine 885 the chain carries N6-acetyllysine. The tract at residues 935–1337 is interaction with FRMD4A; the sequence is KPMVDDDDEG…TPEKGRPFYS (403 aa). Acidic residues predominate over residues 939 to 953; the sequence is DDDDEGMETLEEDTE. Serine 962 carries the post-translational modification Phosphoserine; by AURKA. A phosphoserine mark is found at serine 971 and serine 973. 2 stretches are compositionally biased toward basic and acidic residues: residues 981-1009 and 1030-1043; these read DPEK…EKDK and RKDD…RIKI. Serine 1046 bears the Phosphoserine mark. Positions 1050-1082 form a coiled coil; it reads EEDRVRMKEEQERIQAKTREFRERQARERDYAE. A compositionally biased stretch (polar residues) spans 1138–1147; it reads PGDSNRSTPS. Positions 1148 to 1175 are enriched in basic and acidic residues; sequence NHDRIQRLRQEFQQAKQDEDVEDRRRTY. Coiled-coil stretches lie at residues 1149 to 1172, 1199 to 1222, and 1278 to 1299; these read HDRI…EDRR, VQVQ…YSSL, and MLET…LKKQ. A compositionally biased stretch (low complexity) spans 1180–1203; sequence SWSSSRPASQSGRHSVSVEVQVQR. The span at 1219-1240 shows a compositional bias: polar residues; the sequence is YSSLPRQSRKNASSVSQDSWEQ. The segment covering 1284–1296 has biased composition (basic and acidic residues); that stretch reads LLRQEQRRKEQQL. The span at 1318 to 1327 shows a compositional bias: polar residues; the sequence is SQVARLNRLQ. Positions 1328-1337 are enriched in basic and acidic residues; that stretch reads TPEKGRPFYS. Lysine 1331 carries the N6-acetyllysine modification.

The protein belongs to the PAR3 family. In terms of assembly, component of a complex whose core is composed of ARHGAP17, AMOT, PALS1, PATJ and PARD3/PAR3. Interacts (via PDZ 1 domain) with PARD6A, PARD6B and F11R/JAM1. Interacts with AURKA, AURKB and SIRT2. Interacts with PRKCI. Interacts with PRKCZ. Part of a complex with PARD6A or PARD6B, PRKCI or PRKCZ and CDC42 or RAC1. Interacts with LIMK2 and CDH5. Component of the Par polarity complex, composed of at least phosphorylated PRKCZ, PARD3 and TIAM1. Directly interacts with TIAM1 and TIAM2. Interacts with ECT2 and FBF1. Interacts (via PDZ 3 domain) with PTEN (via C-terminus). Interacts (via coiled-coil domain) with FRMD4A. Found in a complex with PARD3, CYTH1 and FRMD4A. Interacts with SAPCD2. Interacts with PRKCA. Interacts with PRKCZ. Post-translationally, acetylated. Deacetylated by SIRT2, thereby inhibiting Schwann cell peripheral myelination. Phosphorylation at Ser-827 by PRKCZ and PRKCI occurs at the most apical tip of epithelial cell-cell contacts during the initial phase of tight junction formation and may promote dissociation of the complex with PARD6. EGF-induced Tyr-1127 phosphorylation mediates dissociation from LIMK2. Phosphorylation by AURKA at Ser-962 is required for the normal establishment of neuronal polarity. As to expression, isoform 1 is predominantly expressed in lung, glandular stomach, prostate, ovary and uterus. Isoform 1 is also expressed in brain, with a high expression in the cortex, hippocampus and in the striatum. Isoform 2 is predominantly expressed in intestinal epithelial cells, kidney and prostate.

It is found in the cytoplasm. It localises to the endomembrane system. Its subcellular location is the cell junction. The protein resides in the tight junction. The protein localises to the adherens junction. It is found in the cell cortex. It localises to the cytoskeleton. Its subcellular location is the cell membrane. Functionally, adapter protein involved in asymmetrical cell division and cell polarization processes. Seems to play a central role in the formation of epithelial tight junctions. Association with PARD6B may prevent the interaction of PARD3 with F11R/JAM1, thereby preventing tight junction assembly. The PARD6-PARD3 complex links GTP-bound Rho small GTPases to atypical protein kinase C proteins. Required for establishment of neuronal polarity and normal axon formation in cultured hippocampal neurons. Involved in Schwann cell peripheral myelination. Targets the phosphatase PTEN to cell junctions. The chain is Partitioning defective 3 homolog (Pard3) from Rattus norvegicus (Rat).